A 152-amino-acid chain; its full sequence is AIG2-like protein D (152 aa).

Position 13-18 (13-18) interacts with substrate; it reads YGSLMA. The active-site Proton acceptor is the E81.

It belongs to the gamma-glutamylcyclotransferase family. Expressed mainly in leaves.

Functionally, putative gamma-glutamylcyclotransferase. The chain is AIG2-like protein D from Arabidopsis thaliana (Mouse-ear cress).